Reading from the N-terminus, the 479-residue chain is ATP synthase subunit beta (479 aa).

162–169 (GGAGVGKT) lines the ATP pocket.

It belongs to the ATPase alpha/beta chains family. In terms of assembly, F-type ATPases have 2 components, CF(1) - the catalytic core - and CF(0) - the membrane proton channel. CF(1) has five subunits: alpha(3), beta(3), gamma(1), delta(1), epsilon(1). CF(0) has three main subunits: a(1), b(2) and c(9-12). The alpha and beta chains form an alternating ring which encloses part of the gamma chain. CF(1) is attached to CF(0) by a central stalk formed by the gamma and epsilon chains, while a peripheral stalk is formed by the delta and b chains.

It localises to the cell membrane. The enzyme catalyses ATP + H2O + 4 H(+)(in) = ADP + phosphate + 5 H(+)(out). Its function is as follows. Produces ATP from ADP in the presence of a proton gradient across the membrane. The catalytic sites are hosted primarily by the beta subunits. This is ATP synthase subunit beta from Mesoplasma florum (strain ATCC 33453 / NBRC 100688 / NCTC 11704 / L1) (Acholeplasma florum).